The primary structure comprises 627 residues: MEEIIREDYFEALSSRNEEEQEMLRMLTKLEIDSAYTSEKLMNLHVLLMHLLAWDNDLEGMGTLDSSPASFEKALTFDLLCGILESEVKEVDEVLDVLEAQIVDTSYKISSCKHGNYIVIEGKLGESAESLKQSRGQVSEITLQLAQLRRTLHYIRNGTSENEESVELRQKYALKPSDLRHKNALRMLEKSLSRELELEKKLMEFQQNEEQLKLKLHYTEEVSSRMEEASEFIWGRFLEADNSSEVLTGISKELVGRLQILQFSLNGSAQRESELKSKLEDCTVQLEAKDLLVQKLEGTISENSEIVSEVLTLREYVKSAEQKLKNTDLELKSVNASKQEILVHLAEMENANESVKENLFEAESRAESGEAKIKELDAANLELTEELNFLKDADDKKTKKVNSLEKQVRELEVQVQNSKVSSEANQEQQNMLYSAIWDMETLIEDLKSKASKAESRTETVEEQCIVLSTTNSELNKDVSFLRQKAKSLEAMLDLANNEKERYAQEITTRNKVLMDMMLQLSSERERIQEQLYSLAKENKILRVNQCSNTYQRNGSYAGDKELSFHADGHEIEALAESLQEDERTREEPEKQSVSEKSSEIRRAIKLKHILVVALVFVLFCSFFGVTY.

Coiled-coil stretches lie at residues 81–152 (CGIL…RRTL), 188–218 (LEKS…KLHY), and 312–542 (TLRE…KILR). Residues 577–597 (SLQEDERTREEPEKQSVSEKS) form a disordered region. The span at 580 to 597 (EDERTREEPEKQSVSEKS) shows a compositional bias: basic and acidic residues. A helical transmembrane segment spans residues 606–626 (LKHILVVALVFVLFCSFFGVT).

In terms of assembly, component of Ran complexes at least composed of WIT1 or WIT2, RANGAP1 or RANGAP2, and WIP1 or WIP2 or WIP3. Interacts with KAKU1. Core component of the LINC complex which is composed of inner nuclear membrane SUN domain-containing proteins coupled to outer nuclear membrane WIP and WIT proteins. The LINC complex also involves nucleoskeletal proteins CRWN/LINC and possibly KAKU4 and the cytoskeletal myosin KAKU1. Interacts with WIP1, WIP2 and WIP3. In terms of tissue distribution, ubiquitous.

It localises to the membrane. Together with WIT1, required for the nuclear envelope docking of RANGAP proteins in root tips. Plays a role in nuclear shape determination. As component of the SUN-WIP-WIT2-KAKU1 complex, mediates the transfer of cytoplasmic forces to the nuclear envelope (NE), leading to nuclear shape changes. The polypeptide is WPP domain-interacting tail-anchored protein 2 (WIT2) (Arabidopsis thaliana (Mouse-ear cress)).